The following is a 185-amino-acid chain: Ribosome-recycling factor (185 aa).

Belongs to the RRF family.

The protein resides in the cytoplasm. Responsible for the release of ribosomes from messenger RNA at the termination of protein biosynthesis. May increase the efficiency of translation by recycling ribosomes from one round of translation to another. In Campylobacter jejuni subsp. doylei (strain ATCC BAA-1458 / RM4099 / 269.97), this protein is Ribosome-recycling factor.